We begin with the raw amino-acid sequence, 518 residues long: E3 ubiquitin-protein ligase TRIM39 (518 aa).

The RING-type zinc-finger motif lies at 29–70; it reads CSVCLEYLKEPVIIECGHNFCKACITRWWEDLERDFPCPVCR. The segment at 102 to 143 adopts a B box-type zinc-finger fold; that stretch reads RDESLCPQHHEALSLFCYEDQEAVCLICAISHTHRAHTVVPL. Cys-107, His-110, Cys-129, and His-135 together coordinate Zn(2+). Residues 181 to 250 adopt a coiled-coil conformation; that stretch reads ELKRLVESRR…AHLAAEVEGK (70 aa). 2 interaction with CDKN1A regions span residues 268-337 and 389-518; these read KNIP…QLIA and TSGR…TDWE. Residues 319 to 514 enclose the B30.2/SPRY domain; the sequence is SNFPRQYFAL…NAAPLTIRPP (196 aa).

The protein belongs to the TRIM/RBCC family. In terms of assembly, isoform 1 interacts with MOAP1. Isoform 1 and isoform 2 interact with CDKN1A. Isoform 2 interacts (via domain B box-type) with CACTIN. Autoubiquitinated. As to expression, ubiquitous; highly expressed in brain, heart, kidney, liver, skeletal muscle, spleen and testis.

Its subcellular location is the cytoplasm. It is found in the cytosol. The protein localises to the mitochondrion. It localises to the nucleus. The enzyme catalyses S-ubiquitinyl-[E2 ubiquitin-conjugating enzyme]-L-cysteine + [acceptor protein]-L-lysine = [E2 ubiquitin-conjugating enzyme]-L-cysteine + N(6)-ubiquitinyl-[acceptor protein]-L-lysine.. Its pathway is protein modification; protein ubiquitination. Its function is as follows. E3 ubiquitin-protein ligase. May facilitate apoptosis by inhibiting APC/C-Cdh1-mediated poly-ubiquitination and subsequent proteasome-mediated degradation of the pro-apoptotic protein MOAP1. Regulates the G1/S transition of the cell cycle and DNA damage-induced G2 arrest by stabilizing CDKN1A/p21. Positively regulates CDKN1A/p21 stability by competing with DTL for CDKN1A/p21 binding, therefore disrupting DCX(DTL) E3 ubiquitin ligase complex-mediated CDKN1A/p21 ubiquitination and degradation. Functionally, regulates the G1/S transition of the cell cycle and DNA damage-induced G2 arrest by stabilizing CDKN1A/p21. Positively regulates CDKN1A/p21 stability by competing with DTL for CDKN1A/p21 binding, therefore disrupting DCX(DTL) E3 ubiquitin ligase complex-mediated CDKN1A/p21 ubiquitination and degradation. Negatively regulates the canonical NF-kappa-B signaling pathway via stabilization of CACTIN in an ubiquitination-independent manner. In Homo sapiens (Human), this protein is E3 ubiquitin-protein ligase TRIM39 (TRIM39).